Reading from the N-terminus, the 1388-residue chain is ESX-5 secretion system protein EccC5 (1388 aa).

2 helical membrane passes run 38-58 (WLIV…AMVF) and 65-85 (FGGV…MMMF). 3 consecutive FtsK domains span residues 477–679 (GELL…GAAQ), 855–1049 (QPPW…EDAK), and 1158–1351 (LQPV…DPDE). ATP is bound by residues 500–507 (GTTGSGKS), 873–880 (GAGGSGKT), and 1175–1182 (GRRECGRT).

In terms of assembly, part of the ESX-5 / type VII secretion system (T7SS), which is composed of cytosolic and membrane components. The ESX-5 membrane complex is composed of EccB5, EccC5, EccD5 and EccE5.

The protein resides in the cell inner membrane. Part of the ESX-5 specialized secretion system, which is responsible for the secretion of EsxN and a number of PE_PGRS and PPE proteins. This component is essential for ESX-5 complex stability and secretion. In Mycobacterium marinum (strain ATCC BAA-535 / M), this protein is ESX-5 secretion system protein EccC5.